The chain runs to 335 residues: MEEKIKFYFEIIDFQNQKFKIQEFTSKLIGLKEESFTTFKPIVYEKYLNWTQSIEESILKTNGTINKSIFEEIFSYCGYIGEFLEYEPFIVFLKFTTFGIILDDYIFEKINSLNMKLNEKEKLINSLIYYNNKNENKIGFEFWEIINEFQNFTHKESFQRIINANSLWIKSSIDSRNISNSPINSRCSFNEYFEKRSSDASGDFILTISMIGIMDNYIENSIIESKEFQTINYHAKSFFLLINDLYSFNREINENDLLNYIKILAIQLNSIQLSIDKTIELIIDHYLKFLSSIETILKLYQNDQSTYQLLKQVFQNSNKILSGIYFAHKKSKRYN.

Residues 103 to 108 (DDYIFE) carry the DDxx(x)D/E motif motif. An NDxxSxxxD/E motif motif is present at residues 243 to 251 (NDLYSFNRE).

This sequence belongs to the terpene synthase family.

It carries out the reaction (2E,6E)-farnesyl diphosphate + H2O = (6E)-nerolidol + diphosphate. Its function is as follows. Terpene synthase that converts its substrate farnesyl diphosphate (FPP) into the sesquiterpene (E)-nerolidol. The polypeptide is Terpene synthase 4 (Dictyostelium discoideum (Social amoeba)).